The sequence spans 502 residues: Solute carrier family 2, facilitated glucose transporter member 5 (502 aa).

Residue M1 is modified to N-acetylmethionine. The Cytoplasmic portion of the chain corresponds to 1–17 (MEKEDQEKTGKLTLVLA). The helical transmembrane segment at 18 to 38 (LATFLAAFGSSFQYGYNVAAV) threads the bilayer. Residue Y31 participates in D-fructose binding. Over 39–67 (NSPSEFMQQFYNDTYYDRNKENIESFTLT) the chain is Extracellular. Residue N50 is glycosylated (N-linked (GlcNAc...) asparagine). Residues 68-90 (LLWSLTVSMFPFGGFIGSLMVGF) form a helical membrane-spanning segment. The Cytoplasmic segment spans residues 91–97 (LVNNLGR). A helical membrane pass occupies residues 98–118 (KGALLFNNIFSILPAILMGCS). The Extracellular segment spans residues 119–125 (KIAKSFE). A helical membrane pass occupies residues 126–148 (IIIASRLLVGICAGISSNVVPMY). At 149–160 (LGELAPKNLRGA) the chain is on the cytoplasmic side. A helical membrane pass occupies residues 161–181 (LGVVPQLFITVGILVAQLFGL). Position 166 (Q166) interacts with D-fructose. Over 182–191 (RSVLASEEGW) the chain is Extracellular. A helical transmembrane segment spans residues 192–212 (PILLGLTGVPAGLQLLLLPFF). The Cytoplasmic segment spans residues 213–276 (PESPRYLLIQ…LFRMQSLRWQ (64 aa)). A helical transmembrane segment spans residues 277–297 (LISTIVLMAGQQLSGVNAIYY). Residues Q287 and 295–297 (IYY) each bind D-fructose. At 298–312 (YADQIYLSAGVKSND) the chain is on the extracellular side. Residues 313–333 (VQYVTAGTGAVNVFMTMVTVF) traverse the membrane as a helical segment. The Cytoplasmic portion of the chain corresponds to 334-341 (VVELWGRR). A helical transmembrane segment spans residues 342–362 (NLLLIGFSTCLTACIVLTVAL). Residues 363-370 (ALQNTISW) lie on the Extracellular side of the membrane. Residues 371–393 (MPYVSIVCVIVYVIGHAVGPSPI) traverse the membrane as a helical segment. H386 provides a ligand contact to D-fructose. The Cytoplasmic portion of the chain corresponds to 394 to 411 (PALFITEIFLQSSRPSAY). Residues 412–432 (MIGGSVHWLSNFIVGLIFPFI) traverse the membrane as a helical segment. Position 418-419 (418-419 (HW)) interacts with D-fructose. The Extracellular portion of the chain corresponds to 433–438 (QVGLGP). Residues 439-459 (YSFIIFAIICLLTTIYIFMVV) traverse the membrane as a helical segment. Topologically, residues 460–502 (PETKGRTFVEINQIFAKKNKVSDVYPEKEEKELNDLPPATREQ) are cytoplasmic.

Belongs to the major facilitator superfamily. Sugar transporter (TC 2.A.1.1) family. Glucose transporter subfamily. As to expression, detected in jejunum. Detected in kidney, skeletal muscle, brain and adipose tissue (at protein level). Detected in small intestine and in kidney, and at much lower levels in brain. Detected in enterocytes in duodenum, jejunum, and ileum.

It localises to the apical cell membrane. The protein resides in the cell membrane. The protein localises to the sarcolemma. It carries out the reaction D-fructose(out) = D-fructose(in). With respect to regulation, fructose uptake is inhibited by mercury ions. Fructose uptake is only slightly inhibited by cytochalasin B. Its function is as follows. Functions as a fructose transporter that has only low activity with other monosaccharides. Can mediate the uptake of deoxyglucose, but with low efficiency. Essential for fructose uptake in the small intestine. Plays a role in the regulation of salt uptake and blood pressure in response to dietary fructose. Required for the development of high blood pressure in response to high dietary fructose intake. In Rattus norvegicus (Rat), this protein is Solute carrier family 2, facilitated glucose transporter member 5.